We begin with the raw amino-acid sequence, 130 residues long: Small ribosomal subunit protein uS8 (130 aa).

It belongs to the universal ribosomal protein uS8 family. Part of the 30S ribosomal subunit. Contacts proteins S5 and S12.

In terms of biological role, one of the primary rRNA binding proteins, it binds directly to 16S rRNA central domain where it helps coordinate assembly of the platform of the 30S subunit. This Aeromonas hydrophila subsp. hydrophila (strain ATCC 7966 / DSM 30187 / BCRC 13018 / CCUG 14551 / JCM 1027 / KCTC 2358 / NCIMB 9240 / NCTC 8049) protein is Small ribosomal subunit protein uS8.